An 84-amino-acid chain; its full sequence is Transcription elongation factor 1 homolog (84 aa).

Residues cysteine 26, cysteine 29, cysteine 50, and cysteine 53 each contribute to the Zn(2+) site.

The protein belongs to the ELOF1 family.

It localises to the nucleus. Its function is as follows. Transcription elongation factor implicated in the maintenance of proper chromatin structure in actively transcribed regions. The chain is Transcription elongation factor 1 homolog from Caenorhabditis elegans.